We begin with the raw amino-acid sequence, 247 residues long: Ribosomal RNA small subunit methyltransferase J (247 aa).

S-adenosyl-L-methionine-binding positions include 106 to 107 (RD), 122 to 123 (ER), and Asp-168.

Belongs to the methyltransferase superfamily. RsmJ family.

It localises to the cytoplasm. The enzyme catalyses guanosine(1516) in 16S rRNA + S-adenosyl-L-methionine = N(2)-methylguanosine(1516) in 16S rRNA + S-adenosyl-L-homocysteine + H(+). Its function is as follows. Specifically methylates the guanosine in position 1516 of 16S rRNA. The sequence is that of Ribosomal RNA small subunit methyltransferase J from Alcanivorax borkumensis (strain ATCC 700651 / DSM 11573 / NCIMB 13689 / SK2).